An 817-amino-acid chain; its full sequence is Leucine--tRNA ligase (817 aa).

The 'HIGH' region signature appears at Pro-42–His-52. A 'KMSKS' region motif is present at residues Lys-576–Ser-580. Lys-579 is a binding site for ATP.

This sequence belongs to the class-I aminoacyl-tRNA synthetase family.

It localises to the cytoplasm. The catalysed reaction is tRNA(Leu) + L-leucine + ATP = L-leucyl-tRNA(Leu) + AMP + diphosphate. In Methylobacillus flagellatus (strain ATCC 51484 / DSM 6875 / VKM B-1610 / KT), this protein is Leucine--tRNA ligase.